Reading from the N-terminus, the 449-residue chain is Phosphoglucosamine mutase (449 aa).

The active-site Phosphoserine intermediate is serine 99. Mg(2+)-binding residues include serine 99, aspartate 239, aspartate 241, and aspartate 243. The residue at position 99 (serine 99) is a Phosphoserine.

The protein belongs to the phosphohexose mutase family. The cofactor is Mg(2+). Post-translationally, activated by phosphorylation.

The catalysed reaction is alpha-D-glucosamine 1-phosphate = D-glucosamine 6-phosphate. Its function is as follows. Catalyzes the conversion of glucosamine-6-phosphate to glucosamine-1-phosphate. The protein is Phosphoglucosamine mutase of Finegoldia magna (strain ATCC 29328 / DSM 20472 / WAL 2508) (Peptostreptococcus magnus).